We begin with the raw amino-acid sequence, 292 residues long: MSHSSEQPLERVTIPALQQWKDKGRRVVMTTAYDAVAARIADPIVDIILVGDSVGNVCLGFDNTLPVSVAMMNHHLEAVARTRPHALLVADMPFLSFHVGSEDTIRNAGGFLQRGADAVKLEGGAKRIEMVRALVDCDIPVMGHLGLTPQSVNVMGGFKVQGRTTDTALRLLDDAHRLQEAGCFALVLEGIPAELAARATESLTIPTIGIGAGADCSGQVLVFHDVLGLTEGHRPKFVRAYTNGFQLFQEALSRWAADIRKGAFPGSEECYRLPDQLRHAVANWVPSSSTSR.

Mg(2+) contacts are provided by aspartate 52 and aspartate 91. Residues 52-53, aspartate 91, and lysine 120 contribute to the 3-methyl-2-oxobutanoate site; that span reads DS. Glutamate 122 is a Mg(2+) binding site. Glutamate 189 acts as the Proton acceptor in catalysis.

This sequence belongs to the PanB family. As to quaternary structure, homodecamer; pentamer of dimers. Requires Mg(2+) as cofactor.

It is found in the cytoplasm. It catalyses the reaction 3-methyl-2-oxobutanoate + (6R)-5,10-methylene-5,6,7,8-tetrahydrofolate + H2O = 2-dehydropantoate + (6S)-5,6,7,8-tetrahydrofolate. Its pathway is cofactor biosynthesis; (R)-pantothenate biosynthesis; (R)-pantoate from 3-methyl-2-oxobutanoate: step 1/2. In terms of biological role, catalyzes the reversible reaction in which hydroxymethyl group from 5,10-methylenetetrahydrofolate is transferred onto alpha-ketoisovalerate to form ketopantoate. The sequence is that of 3-methyl-2-oxobutanoate hydroxymethyltransferase 2 from Bradyrhizobium diazoefficiens (strain JCM 10833 / BCRC 13528 / IAM 13628 / NBRC 14792 / USDA 110).